The chain runs to 529 residues: [Pyruvate dehydrogenase [acetyl-transferring]]-phosphatase 2, mitochondrial (529 aa).

The transit peptide at 1-66 (MSSTVSYWIL…FTLCKAYRHT (66 aa)) directs the protein to the mitochondrion. Residues 106 to 517 (VLRFESNQLA…DDITVTVVYF (412 aa)) form the PPM-type phosphatase domain. Residues aspartate 141, glycine 142, aspartate 412, and aspartate 508 each contribute to the Mn(2+) site.

The protein belongs to the PP2C family. The cofactor is Mg(2+).

The protein resides in the mitochondrion. It carries out the reaction O-phospho-L-seryl-[pyruvate dehydrogenase E1 alpha subunit] + H2O = L-seryl-[pyruvate dehydrogenase E1 alpha subunit] + phosphate. Its function is as follows. Mitochondrial enzyme that catalyzes the dephosphorylation and concomitant reactivation of the alpha subunit of the E1 component of the pyruvate dehydrogenase complex (PDC), thereby stimulating the conversion of pyruvate into acetyl-CoA. Acts as a crucial regulator of T cell metabolism and function, with a particular focus on T-helper Th17. The chain is [Pyruvate dehydrogenase [acetyl-transferring]]-phosphatase 2, mitochondrial from Homo sapiens (Human).